The sequence spans 206 residues: Putative transporter protein AmiS2 (206 aa).

Transmembrane regions (helical) follow at residues Val-4–Val-24, Ala-29–Ile-49, Ser-56–Ile-76, Gly-86–Phe-106, Val-113–Gly-133, Phe-142–Ile-162, and Val-173–Ala-193.

The protein belongs to the AmiS/UreI family.

Its subcellular location is the cell membrane. In terms of biological role, possible transporter that might be responsible for the adsorption of amidase substrates or release of their hydrolysis products. The protein is Putative transporter protein AmiS2 (amiS2) of Rhodococcus erythropolis (Arthrobacter picolinophilus).